The primary structure comprises 91 residues: Putative regulatory protein Moth_0891 (91 aa).

It belongs to the RemA family.

The sequence is that of Putative regulatory protein Moth_0891 from Moorella thermoacetica (strain ATCC 39073 / JCM 9320).